The following is a 382-amino-acid chain: Lipid-A-disaccharide synthase (382 aa).

This sequence belongs to the LpxB family.

It catalyses the reaction 2-N,3-O-bis[(3R)-3-hydroxytetradecanoyl]-alpha-D-glucosaminyl 1-phosphate + UDP-2-N,3-O-bis[(3R)-3-hydroxytetradecanoyl]-alpha-D-glucosamine = lipid A disaccharide (E. coli) + UDP + H(+). The enzyme catalyses a lipid X + a UDP-2-N,3-O-bis[(3R)-3-hydroxyacyl]-alpha-D-glucosamine = a lipid A disaccharide + UDP + H(+). It functions in the pathway glycolipid biosynthesis; lipid IV(A) biosynthesis; lipid IV(A) from (3R)-3-hydroxytetradecanoyl-[acyl-carrier-protein] and UDP-N-acetyl-alpha-D-glucosamine: step 5/6. Its function is as follows. Condensation of UDP-2,3-diacylglucosamine and 2,3-diacylglucosamine-1-phosphate to form lipid A disaccharide, a precursor of lipid A, a phosphorylated glycolipid that anchors the lipopolysaccharide to the outer membrane of the cell. The sequence is that of Lipid-A-disaccharide synthase from Escherichia coli O157:H7.